A 189-amino-acid polypeptide reads, in one-letter code: Molybdopterin synthase catalytic subunit (189 aa).

The residue at position 20 (serine 20) is a Phosphoserine. Residues 143–144 (HR), lysine 159, and 166–168 (KKE) contribute to the substrate site.

This sequence belongs to the MoaE family. MOCS2B subfamily. As to quaternary structure, heterotetramer; composed of 2 small (MOCS2A) and 2 large (MOCS2B) subunits.

It is found in the cytoplasm. Its subcellular location is the cytosol. It catalyses the reaction 2 [molybdopterin-synthase sulfur-carrier protein]-C-terminal-Gly-aminoethanethioate + cyclic pyranopterin phosphate + H2O = molybdopterin + 2 [molybdopterin-synthase sulfur-carrier protein]-C-terminal Gly-Gly + 2 H(+). It functions in the pathway cofactor biosynthesis; molybdopterin biosynthesis. Catalytic subunit of the molybdopterin synthase complex, a complex that catalyzes the conversion of precursor Z into molybdopterin. Acts by mediating the incorporation of 2 sulfur atoms from thiocarboxylated MOCS2A into precursor Z to generate a dithiolene group. This is Molybdopterin synthase catalytic subunit from Bos taurus (Bovine).